The primary structure comprises 257 residues: Ribonuclease HII (257 aa).

In terms of domain architecture, RNase H type-2 spans 72–257; it reads TYIAGIDEVG…FAPIKDMIKK (186 aa). A divalent metal cation is bound by residues Asp-78, Glu-79, and Asp-170.

This sequence belongs to the RNase HII family. It depends on Mn(2+) as a cofactor. Requires Mg(2+) as cofactor.

The protein resides in the cytoplasm. It catalyses the reaction Endonucleolytic cleavage to 5'-phosphomonoester.. Endonuclease that specifically degrades the RNA of RNA-DNA hybrids. In Bacillus anthracis (strain A0248), this protein is Ribonuclease HII.